The primary structure comprises 1403 residues: Sushi, nidogen and EGF-like domain-containing protein 1 (1403 aa).

A signal peptide spans 1 to 24; sequence MRLGAAWALLLAAALGLGTRGVRA. The NIDO domain occupies 103-258; it reads AFWADVDNRR…GRWAFRIDDA (156 aa). 3 EGF-like domains span residues 268–309, 311–347, and 349–385; these read TTSV…RRCH, DVNE…PTCE, and AQSP…ATCE. Cystine bridges form between Cys-272-Cys-284, Cys-278-Cys-297, Cys-299-Cys-308, Cys-315-Cys-326, Cys-320-Cys-335, Cys-337-Cys-346, Cys-353-Cys-364, Cys-358-Cys-373, Cys-375-Cys-384, Cys-391-Cys-402, Cys-396-Cys-411, Cys-413-Cys-422, Cys-433-Cys-444, Cys-438-Cys-453, Cys-455-Cys-464, Cys-472-Cys-480, Cys-474-Cys-488, and Cys-490-Cys-499. N-linked (GlcNAc...) asparagine glycosylation is present at Asn-292. Residues 387–423 enclose the EGF-like 4; calcium-binding domain; sequence DVDECSSDPCQNGGSCVDLVGNYSCICVEPFEGPQCE. Asn-408 carries an N-linked (GlcNAc...) asparagine glycan. 2 consecutive EGF-like domains span residues 429-465 and 468-500; these read VPSP…LDCR and ILND…LLCE. Asn-484 carries an N-linked (GlcNAc...) asparagine glycan. Asn-536 is a glycosylation site (N-linked (GlcNAc...) asparagine). 4 consecutive EGF-like domains span residues 541–577, 580–616, 619–655, and 657–693; these read LPSP…RHCE, RPHL…RHCE, KPDS…RHCE, and APSP…HRCQ. Intrachain disulfides connect Cys-545–Cys-556, Cys-550–Cys-565, Cys-567–Cys-576, Cys-584–Cys-595, Cys-589–Cys-604, Cys-606–Cys-615, Cys-623–Cys-634, Cys-628–Cys-643, Cys-645–Cys-654, Cys-661–Cys-672, Cys-666–Cys-681, Cys-683–Cys-692, Cys-698–Cys-739, Cys-724–Cys-751, Cys-757–Cys-768, Cys-762–Cys-777, Cys-779–Cys-788, Cys-795–Cys-806, Cys-800–Cys-815, Cys-817–Cys-826, Cys-833–Cys-844, Cys-838–Cys-853, Cys-855–Cys-864, Cys-871–Cys-882, Cys-876–Cys-891, and Cys-893–Cys-902. The Sushi domain maps to 696 to 753; sequence VDCGHPEEVEHATMRFNGTHVGSVALYTCEPGFSLSALSHIRVCQPQGVWSQPPQCIE. N-linked (GlcNAc...) asparagine glycosylation is present at Asn-712. The 37-residue stretch at 753 to 789 folds into the EGF-like 11; calcium-binding domain; sequence EVDECRSQPCLHGGSCQDLIADYQCLCSPGYEGVHCE. An EGF-like 12; calcium-binding domain is found at 791–827; that stretch reads ETDECQAQPCRNGGSCRDLPRAFICQCPEGFVGIHCE. EGF-like domains are found at residues 829–865 and 867–903; these read EVDA…YNCE and VSDP…KDCT. N-linked (GlcNAc...) asparagine glycosylation occurs at Asn-886. 3 Fibronectin type-III domains span residues 908–1006, 1007–1105, and 1106–1200; these read PPTA…TRPR, PIED…TRPL, and PPAN…SPRD. 5 N-linked (GlcNAc...) asparagine glycosylation sites follow: Asn-977, Asn-1015, Asn-1109, Asn-1139, and Asn-1298. The EGF-like 15 domain occupies 1306 to 1342; that stretch reads TPGSCSEDACQNGGTCVPGADAHSCDCRPGFKGRHCE. 3 cysteine pairs are disulfide-bonded: Cys-1310–Cys-1321, Cys-1315–Cys-1330, and Cys-1332–Cys-1341.

Post-translationally, phosphorylated on serine and threonine residues. N-glycosylated. Expressed in lung.

Its subcellular location is the secreted. It localises to the extracellular space. The protein localises to the extracellular matrix. This is Sushi, nidogen and EGF-like domain-containing protein 1 from Mus musculus (Mouse).